Reading from the N-terminus, the 342-residue chain is MKHLLSTQDLSLHNAIRILDTAEEMSAVGDREVKKLPALRGRTVVNLFFEDSTRTRISFEAAAKRLSADVINFAAKGSSVSKGESLKDTAQTLSAMGADAVVIRHWASGAPHRLAATDWIDAGVINAGDGTHEHPTQALLDAFTMRRHWAKLSGTPSEGADLKGMRVAIAGDVLHSRVARSNVWLLRTLGAEVTLVAPPTLLPIGVEKWPCAVSYDLDETLARGVDAVMMLRVQGERMNASFFPSTREYSRRWGFDDNRLRALDSLGMKDTIIMHPGPMNRGLEISAAAADSPRSTVLAQVRNGVSVRMAALYLLLSGDTRETAAPPVLAAAGTAHSTKESI.

2 residues coordinate carbamoyl phosphate: Arg54 and Thr55. Lys82 provides a ligand contact to L-aspartate. 3 residues coordinate carbamoyl phosphate: Arg104, His134, and Gln137. Arg177 and Arg232 together coordinate L-aspartate. Carbamoyl phosphate contacts are provided by Gly277 and Pro278.

This sequence belongs to the aspartate/ornithine carbamoyltransferase superfamily. ATCase family. As to quaternary structure, heterododecamer (2C3:3R2) of six catalytic PyrB chains organized as two trimers (C3), and six regulatory PyrI chains organized as three dimers (R2).

The enzyme catalyses carbamoyl phosphate + L-aspartate = N-carbamoyl-L-aspartate + phosphate + H(+). It functions in the pathway pyrimidine metabolism; UMP biosynthesis via de novo pathway; (S)-dihydroorotate from bicarbonate: step 2/3. Its function is as follows. Catalyzes the condensation of carbamoyl phosphate and aspartate to form carbamoyl aspartate and inorganic phosphate, the committed step in the de novo pyrimidine nucleotide biosynthesis pathway. The chain is Aspartate carbamoyltransferase catalytic subunit from Pseudarthrobacter chlorophenolicus (strain ATCC 700700 / DSM 12829 / CIP 107037 / JCM 12360 / KCTC 9906 / NCIMB 13794 / A6) (Arthrobacter chlorophenolicus).